Here is a 303-residue protein sequence, read N- to C-terminus: GTPase Era (303 aa).

The Era-type G domain maps to lysine 7–glutamate 176. The G1 stretch occupies residues glycine 15 to serine 22. GTP is bound at residue glycine 15–serine 22. The interval glutamine 41 to asparagine 45 is G2. Positions aspartate 62–glycine 65 are G3. GTP-binding positions include aspartate 62–valine 66 and asparagine 125–aspartate 128. The G4 stretch occupies residues asparagine 125–aspartate 128. The segment at isoleucine 155–alanine 157 is G5. The KH type-2 domain maps to threonine 207–proline 284.

This sequence belongs to the TRAFAC class TrmE-Era-EngA-EngB-Septin-like GTPase superfamily. Era GTPase family. Monomer.

The protein localises to the cytoplasm. It localises to the cell membrane. An essential GTPase that binds both GDP and GTP, with rapid nucleotide exchange. Plays a role in 16S rRNA processing and 30S ribosomal subunit biogenesis and possibly also in cell cycle regulation and energy metabolism. This is GTPase Era from Leuconostoc citreum (strain KM20).